Here is a 188-residue protein sequence, read N- to C-terminus: Succinate-acetate/proton symporter SatP (188 aa).

Topologically, residues 1–13 are cytoplasmic; that stretch reads MGNTKLANPAPLG. The helical transmembrane segment at 14–34 threads the bilayer; the sequence is LMGFGMTTILLNLHNVGYFAL. Position 35 (Asp-35) is a topological domain, periplasmic. The helical transmembrane segment at 36–56 threads the bilayer; it reads GIILAMGIFYGGIAQIFAGLL. Over 57–63 the chain is Cytoplasmic; that stretch reads EYKKGNT. The chain crosses the membrane as a helical span at residues 64-84; that stretch reads FGLTAFTSYGSFWLTLVAILL. Topologically, residues 85-97 are periplasmic; that stretch reads MPKLGLTDAPNAQ. A helical transmembrane segment spans residues 98-118; it reads FLGVYLGLWGVFTLFMFFGTL. Topologically, residues 119–122 are cytoplasmic; the sequence is KGAR. The chain crosses the membrane as a helical span at residues 123 to 143; sequence VLQFVFFSLTVLFALLAIGNI. Residues 144–148 lie on the Periplasmic side of the membrane; it reads AGNAA. Residues 149 to 169 form a helical membrane-spanning segment; the sequence is IIHFAGWIGLICGASAIYLAM. Over 170–188 the chain is Cytoplasmic; that stretch reads GEVLNEQFGRTVLPIGESH.

It belongs to the acetate uptake transporter (AceTr) (TC 2.A.96) family.

Its subcellular location is the cell inner membrane. In terms of biological role, uptake of acetate and succinate. Transport is energetically dependent on the protonmotive force. The protein is Succinate-acetate/proton symporter SatP (satP) of Escherichia coli O157:H7.